The primary structure comprises 127 residues: Gamma-synuclein (127 aa).

2 repeat units span residues Glu20–Ala30 and Glu31–Gly41. Residues Glu20–Ser67 form a 4 X 11 AA tandem repeats of [EGSA]-K-T-K-[EQ]-[GQ]-V-X(4) region. The stretch at Ala42–Ala56 is one 3; approximate repeat. Residues Glu57–Ser67 form repeat 4. Residues Ser67 and Ser72 each carry the phosphoserine modification. The interval Arg96–Asp127 is disordered. A Phosphoserine; by BARK1, CaMK2 and CK2 modification is found at Ser124.

The protein belongs to the synuclein family. As to quaternary structure, may be a centrosome-associated protein. Interacts with MYOC; affects its secretion and its aggregation. Phosphorylated. Phosphorylation by GRK5 appears to occur on residues distinct from the residue phosphorylated by other kinases. As to expression, highly expressed in brain, particularly in the substantia nigra. Also expressed in the corpus callosum, heart, skeletal muscle, ovary, testis, colon and spleen. Weak expression in pancreas, kidney and lung.

It is found in the cytoplasm. Its subcellular location is the perinuclear region. It localises to the cytoskeleton. The protein localises to the microtubule organizing center. The protein resides in the centrosome. It is found in the spindle. Plays a role in neurofilament network integrity. May be involved in modulating axonal architecture during development and in the adult. In vitro, increases the susceptibility of neurofilament-H to calcium-dependent proteases. May also function in modulating the keratin network in skin. Activates the MAPK and Elk-1 signal transduction pathway. This is Gamma-synuclein (SNCG) from Homo sapiens (Human).